The sequence spans 232 residues: UPF0758 protein Clos_1766 (232 aa).

Positions 110–232 (KIKGPDDVSN…YFSMKEHKLI (123 aa)) constitute an MPN domain. Zn(2+) contacts are provided by histidine 181, histidine 183, and aspartate 194. The JAMM motif motif lies at 181-194 (HNHPSGDPNPSGED).

The protein belongs to the UPF0758 family.

This Alkaliphilus oremlandii (strain OhILAs) (Clostridium oremlandii (strain OhILAs)) protein is UPF0758 protein Clos_1766.